Consider the following 61-residue polypeptide: Large ribosomal subunit protein uL30 (61 aa).

It belongs to the universal ribosomal protein uL30 family. In terms of assembly, part of the 50S ribosomal subunit.

The chain is Large ribosomal subunit protein uL30 from Chromobacterium violaceum (strain ATCC 12472 / DSM 30191 / JCM 1249 / CCUG 213 / NBRC 12614 / NCIMB 9131 / NCTC 9757 / MK).